The sequence spans 477 residues: UDP-N-acetylmuramate--L-alanine ligase (477 aa).

122-128 serves as a coordination point for ATP; sequence GTHGKTT.

The protein belongs to the MurCDEF family.

The protein localises to the cytoplasm. It carries out the reaction UDP-N-acetyl-alpha-D-muramate + L-alanine + ATP = UDP-N-acetyl-alpha-D-muramoyl-L-alanine + ADP + phosphate + H(+). Its pathway is cell wall biogenesis; peptidoglycan biosynthesis. Cell wall formation. This is UDP-N-acetylmuramate--L-alanine ligase from Xylella fastidiosa (strain M12).